A 324-amino-acid chain; its full sequence is Putative S-adenosyl-L-methionine-dependent methyltransferase MUL_0818 (324 aa).

S-adenosyl-L-methionine contacts are provided by residues aspartate 138 and aspartate 167–leucine 168.

The protein belongs to the UPF0677 family.

Exhibits S-adenosyl-L-methionine-dependent methyltransferase activity. This is Putative S-adenosyl-L-methionine-dependent methyltransferase MUL_0818 from Mycobacterium ulcerans (strain Agy99).